The chain runs to 68 residues: Large ribosomal subunit protein bL31 (68 aa).

Residues Cys16, Cys18, Cys36, and Cys39 each coordinate Zn(2+).

It belongs to the bacterial ribosomal protein bL31 family. Type A subfamily. Part of the 50S ribosomal subunit. The cofactor is Zn(2+).

Binds the 23S rRNA. In Lachnospira eligens (strain ATCC 27750 / DSM 3376 / VPI C15-48 / C15-B4) (Eubacterium eligens), this protein is Large ribosomal subunit protein bL31.